A 743-amino-acid polypeptide reads, in one-letter code: Phosphoribosylformylglycinamidine synthase subunit PurL (743 aa).

H54 is an active-site residue. Positions 57 and 96 each coordinate ATP. E98 is a Mg(2+) binding site. Substrate is bound by residues 99–102 (SHNH) and R121. H100 (proton acceptor) is an active-site residue. Mg(2+) is bound at residue D122. A substrate-binding site is contributed by Q245. D273 contributes to the Mg(2+) binding site. A substrate-binding site is contributed by 317-319 (ESQ). Residues D500 and G537 each coordinate ATP. N538 contacts Mg(2+). S540 serves as a coordination point for substrate.

The protein belongs to the FGAMS family. As to quaternary structure, monomer. Part of the FGAM synthase complex composed of 1 PurL, 1 PurQ and 2 PurS subunits.

Its subcellular location is the cytoplasm. It catalyses the reaction N(2)-formyl-N(1)-(5-phospho-beta-D-ribosyl)glycinamide + L-glutamine + ATP + H2O = 2-formamido-N(1)-(5-O-phospho-beta-D-ribosyl)acetamidine + L-glutamate + ADP + phosphate + H(+). It participates in purine metabolism; IMP biosynthesis via de novo pathway; 5-amino-1-(5-phospho-D-ribosyl)imidazole from N(2)-formyl-N(1)-(5-phospho-D-ribosyl)glycinamide: step 1/2. Functionally, part of the phosphoribosylformylglycinamidine synthase complex involved in the purines biosynthetic pathway. Catalyzes the ATP-dependent conversion of formylglycinamide ribonucleotide (FGAR) and glutamine to yield formylglycinamidine ribonucleotide (FGAM) and glutamate. The FGAM synthase complex is composed of three subunits. PurQ produces an ammonia molecule by converting glutamine to glutamate. PurL transfers the ammonia molecule to FGAR to form FGAM in an ATP-dependent manner. PurS interacts with PurQ and PurL and is thought to assist in the transfer of the ammonia molecule from PurQ to PurL. This chain is Phosphoribosylformylglycinamidine synthase subunit PurL, found in Bacillus pumilus (strain SAFR-032).